The primary structure comprises 537 residues: Probable sterol O-acyltransferase 1 (537 aa).

The next 4 membrane-spanning stretches (helical) occupy residues 98–118, 140–160, 174–194, and 199–219; these read FRGF…QLYA, FFVL…SYGL, LGYT…VYWV, and FPIV…MKQF. Asn250 carries N-linked (GlcNAc...) asparagine glycosylation. The next 2 membrane-spanning stretches (helical) occupy residues 344–364 and 384–404; these read FGLL…SAVA and IMFP…DCIL. An FYXDWWN motif motif is present at residues 418 to 424; that stretch reads FYGAWWN. Helical transmembrane passes span 462 to 482 and 517 to 537; these read AVLL…LLAT and VFFW…YIVF. His474 is a catalytic residue.

The protein belongs to the membrane-bound acyltransferase family. Sterol o-acyltransferase subfamily.

It localises to the endoplasmic reticulum membrane. Its function is as follows. Sterol O-acyltransferase that catalyzes the formation of stery esters. The protein is Probable sterol O-acyltransferase 1 (are1) of Schizosaccharomyces pombe (strain 972 / ATCC 24843) (Fission yeast).